A 173-amino-acid chain; its full sequence is MTIAKDMMVNDGIRARELRLIGQDGEQLGVKTKAEALQIAESANLDLVLVAPGAKPPVARIMDYGKFRFEQQKKEREARKKQKVINVKEVRLSPTIDVNDFNTKLRNARKFLEKGDKVKASIRFKGRAITHKEIGQKVLDRLAEETADIATVEQKAKMDGRSMFLTLAPKNDK.

This sequence belongs to the IF-3 family. As to quaternary structure, monomer.

The protein resides in the cytoplasm. In terms of biological role, IF-3 binds to the 30S ribosomal subunit and shifts the equilibrium between 70S ribosomes and their 50S and 30S subunits in favor of the free subunits, thus enhancing the availability of 30S subunits on which protein synthesis initiation begins. The chain is Translation initiation factor IF-3 from Enterococcus faecalis (strain ATCC 700802 / V583).